Reading from the N-terminus, the 129-residue chain is Small ribosomal subunit protein uS8 (129 aa).

This sequence belongs to the universal ribosomal protein uS8 family. In terms of assembly, part of the 30S ribosomal subunit. Contacts proteins S5 and S12.

Its function is as follows. One of the primary rRNA binding proteins, it binds directly to 16S rRNA central domain where it helps coordinate assembly of the platform of the 30S subunit. The polypeptide is Small ribosomal subunit protein uS8 (Mesoplasma florum (strain ATCC 33453 / NBRC 100688 / NCTC 11704 / L1) (Acholeplasma florum)).